Consider the following 831-residue polypeptide: Periplasmic nitrate reductase (831 aa).

A signal peptide (tat-type signal) is located at residues 1–31 (MKLSRRDFMKANAAVAAAAAAGLTIPTVAKA). The 4Fe-4S Mo/W bis-MGD-type domain maps to 40-96 (IKWDKAPCRFCGTGCGVLVGTQNGRIVASQGDPDSPVNRGLNCVKGYFLPKIMYGKD). 4 residues coordinate [4Fe-4S] cluster: C47, C50, C54, and C82. Residues K84, Q151, N176, C180, 213 to 220 (WGSNMAEM), 244 to 248 (STFEH), 263 to 265 (QTD), M373, Q377, N483, 509 to 510 (SD), K532, D559, and 719 to 728 (TGRVLEHWHT) contribute to the Mo-bis(molybdopterin guanine dinucleotide) site. F795 serves as a coordination point for substrate. N803 and K820 together coordinate Mo-bis(molybdopterin guanine dinucleotide).

This sequence belongs to the prokaryotic molybdopterin-containing oxidoreductase family. NasA/NapA/NarB subfamily. Component of the periplasmic nitrate reductase NapAB complex composed of NapA and NapB. Requires [4Fe-4S] cluster as cofactor. It depends on Mo-bis(molybdopterin guanine dinucleotide) as a cofactor. Post-translationally, predicted to be exported by the Tat system. The position of the signal peptide cleavage has not been experimentally proven.

The protein resides in the periplasm. The catalysed reaction is 2 Fe(II)-[cytochrome] + nitrate + 2 H(+) = 2 Fe(III)-[cytochrome] + nitrite + H2O. Catalytic subunit of the periplasmic nitrate reductase complex NapAB. Receives electrons from NapB and catalyzes the reduction of nitrate to nitrite. In Yersinia enterocolitica serotype O:8 / biotype 1B (strain NCTC 13174 / 8081), this protein is Periplasmic nitrate reductase.